The following is a 593-amino-acid chain: UvrABC system protein C (593 aa).

In terms of domain architecture, GIY-YIG spans 14-91; sequence DSPGCYLHKD…IQENMPKYNI (78 aa). A UVR domain is found at 196 to 231; it reads NKIVNGLTEKMKSAAMTMEFERAAEYRDLIEAISLL.

Belongs to the UvrC family. As to quaternary structure, interacts with UvrB in an incision complex.

It is found in the cytoplasm. In terms of biological role, the UvrABC repair system catalyzes the recognition and processing of DNA lesions. UvrC both incises the 5' and 3' sides of the lesion. The N-terminal half is responsible for the 3' incision and the C-terminal half is responsible for the 5' incision. This is UvrABC system protein C from Streptococcus agalactiae serotype Ia (strain ATCC 27591 / A909 / CDC SS700).